Here is a 645-residue protein sequence, read N- to C-terminus: Exoribonuclease 2 (645 aa).

One can recognise an RNB domain in the interval 191 to 517; it reads REDLTELNFI…MNHRLLKALI (327 aa). Residues 563-645 enclose the S1 motif domain; it reads HIRYSAEIID…DNRSIIAKIV (83 aa).

This sequence belongs to the RNR ribonuclease family. RNase II subfamily.

It is found in the cytoplasm. The catalysed reaction is Exonucleolytic cleavage in the 3'- to 5'-direction to yield nucleoside 5'-phosphates.. Its function is as follows. Involved in mRNA degradation. Hydrolyzes single-stranded polyribonucleotides processively in the 3' to 5' direction. In Baumannia cicadellinicola subsp. Homalodisca coagulata, this protein is Exoribonuclease 2.